Here is a 340-residue protein sequence, read N- to C-terminus: Adenosine deaminase-like protein (340 aa).

Positions 14 and 16 each coordinate Zn(2+). Residues H16, N18, H68, T100–K103, and G173 each bind N(6)-methyl-AMP. H200 contributes to the Zn(2+) binding site. 3 residues coordinate N(6)-methyl-AMP: E203, D278, and D279. Catalysis depends on E203, which acts as the Proton donor. D278 contributes to the Zn(2+) binding site.

The protein belongs to the metallo-dependent hydrolases superfamily. Adenosine and AMP deaminases family. In terms of assembly, monomer. It depends on Zn(2+) as a cofactor.

The catalysed reaction is N(6)-methyl-AMP + H2O + H(+) = IMP + methylamine. In terms of biological role, catalyzes the hydrolysis of the free cytosolic methylated adenosine nucleotide N(6)-methyl-AMP (N6-mAMP) to produce inositol monophosphate (IMP) and methylamine. Is required for the catabolism of cytosolic N6-mAMP, which is derived from the degradation of mRNA containing N6-methylated adenine (m6A). The polypeptide is Adenosine deaminase-like protein (Drosophila pseudoobscura pseudoobscura (Fruit fly)).